The sequence spans 330 residues: Glycerol-3-phosphate dehydrogenase [NAD(P)+] (330 aa).

Positions 14, 15, 35, and 109 each coordinate NADPH. Residues lysine 109 and glycine 137 each coordinate sn-glycerol 3-phosphate. Alanine 141 serves as a coordination point for NADPH. Residues lysine 192, aspartate 248, serine 258, arginine 259, and asparagine 260 each coordinate sn-glycerol 3-phosphate. Lysine 192 acts as the Proton acceptor in catalysis. Arginine 259 is a binding site for NADPH. NADPH contacts are provided by leucine 283 and glutamate 285.

The protein belongs to the NAD-dependent glycerol-3-phosphate dehydrogenase family.

The protein resides in the cytoplasm. The catalysed reaction is sn-glycerol 3-phosphate + NAD(+) = dihydroxyacetone phosphate + NADH + H(+). The enzyme catalyses sn-glycerol 3-phosphate + NADP(+) = dihydroxyacetone phosphate + NADPH + H(+). It participates in membrane lipid metabolism; glycerophospholipid metabolism. Functionally, catalyzes the reduction of the glycolytic intermediate dihydroxyacetone phosphate (DHAP) to sn-glycerol 3-phosphate (G3P), the key precursor for phospholipid synthesis. In Rickettsia massiliae (strain Mtu5), this protein is Glycerol-3-phosphate dehydrogenase [NAD(P)+].